The sequence spans 470 residues: uncharacterized protein (470 aa).

Positions 1–337 (MKFGHDFKRA…SLTAQPLFFQ (337 aa)) constitute an SPX domain. Residues 118 to 145 (ASNVPSTPSDSTQQPPTNTLPSVSASSQ) form a disordered region. Residues 122–136 (PSTPSDSTQQPPTNT) show a composition bias toward low complexity. An RING-type zinc finger spans residues 374-413 (CAICSNVAYKPVRLGCSHVFCLHCLIILQKQKVDFCPLCR).

It is found in the cytoplasm. This is an uncharacterized protein from Schizosaccharomyces pombe (strain 972 / ATCC 24843) (Fission yeast).